A 598-amino-acid polypeptide reads, in one-letter code: Proline--tRNA ligase (598 aa).

This sequence belongs to the class-II aminoacyl-tRNA synthetase family. ProS type 1 subfamily. As to quaternary structure, homodimer.

The protein localises to the cytoplasm. The catalysed reaction is tRNA(Pro) + L-proline + ATP = L-prolyl-tRNA(Pro) + AMP + diphosphate. Functionally, catalyzes the attachment of proline to tRNA(Pro) in a two-step reaction: proline is first activated by ATP to form Pro-AMP and then transferred to the acceptor end of tRNA(Pro). As ProRS can inadvertently accommodate and process non-cognate amino acids such as alanine and cysteine, to avoid such errors it has two additional distinct editing activities against alanine. One activity is designated as 'pretransfer' editing and involves the tRNA(Pro)-independent hydrolysis of activated Ala-AMP. The other activity is designated 'posttransfer' editing and involves deacylation of mischarged Ala-tRNA(Pro). The misacylated Cys-tRNA(Pro) is not edited by ProRS. The sequence is that of Proline--tRNA ligase from Rippkaea orientalis (strain PCC 8801 / RF-1) (Cyanothece sp. (strain PCC 8801)).